The primary structure comprises 164 residues: MVAHTRADSAPKPTDPALAGARILVVEARYYDAIADELLAGALAAIEAADARATVVTVPGALEIPAAAAILLDTGAYDAVVALGCVIRGETGHYDIVAGESARALMDLSVQRRVPLGNGILTVETEAQALARARVAEMNKGGGAAEAALGVLALKRMADGARPR.

Residues Y30, 61–63 (ALE), and 85–87 (CVI) each bind 5-amino-6-(D-ribitylamino)uracil. 90–91 (ET) is a binding site for (2S)-2-hydroxy-3-oxobutyl phosphate. The Proton donor role is filled by H93. N118 contributes to the 5-amino-6-(D-ribitylamino)uracil binding site. Residue R132 participates in (2S)-2-hydroxy-3-oxobutyl phosphate binding.

It belongs to the DMRL synthase family.

The enzyme catalyses (2S)-2-hydroxy-3-oxobutyl phosphate + 5-amino-6-(D-ribitylamino)uracil = 6,7-dimethyl-8-(1-D-ribityl)lumazine + phosphate + 2 H2O + H(+). The protein operates within cofactor biosynthesis; riboflavin biosynthesis; riboflavin from 2-hydroxy-3-oxobutyl phosphate and 5-amino-6-(D-ribitylamino)uracil: step 1/2. Catalyzes the formation of 6,7-dimethyl-8-ribityllumazine by condensation of 5-amino-6-(D-ribitylamino)uracil with 3,4-dihydroxy-2-butanone 4-phosphate. This is the penultimate step in the biosynthesis of riboflavin. This Methylobacterium radiotolerans (strain ATCC 27329 / DSM 1819 / JCM 2831 / NBRC 15690 / NCIMB 10815 / 0-1) protein is 6,7-dimethyl-8-ribityllumazine synthase.